A 180-amino-acid chain; its full sequence is Cytidylate kinase (180 aa).

7-15 serves as a coordination point for ATP; sequence GPPGSGKST.

The protein belongs to the cytidylate kinase family. Type 2 subfamily.

It localises to the cytoplasm. It catalyses the reaction CMP + ATP = CDP + ADP. The enzyme catalyses dCMP + ATP = dCDP + ADP. The sequence is that of Cytidylate kinase from Sulfurisphaera tokodaii (strain DSM 16993 / JCM 10545 / NBRC 100140 / 7) (Sulfolobus tokodaii).